Consider the following 222-residue polypeptide: Potassium-transporting ATPase KdpC subunit (222 aa).

The helical transmembrane segment at 13–35 (WAGLRSLLVLTVVTGVLYPLAVT) threads the bilayer. The disordered stretch occupies residues 136 to 162 (TADHKVKPSDVPADAVTSSGSGLDPDI).

It belongs to the KdpC family. As to quaternary structure, the system is composed of three essential subunits: KdpA, KdpB and KdpC.

The protein localises to the cell membrane. Its function is as follows. Part of the high-affinity ATP-driven potassium transport (or Kdp) system, which catalyzes the hydrolysis of ATP coupled with the electrogenic transport of potassium into the cytoplasm. This subunit acts as a catalytic chaperone that increases the ATP-binding affinity of the ATP-hydrolyzing subunit KdpB by the formation of a transient KdpB/KdpC/ATP ternary complex. This chain is Potassium-transporting ATPase KdpC subunit, found in Streptomyces avermitilis (strain ATCC 31267 / DSM 46492 / JCM 5070 / NBRC 14893 / NCIMB 12804 / NRRL 8165 / MA-4680).